The primary structure comprises 369 residues: Glutamate 5-kinase (369 aa).

ATP is bound at residue K9. Substrate-binding residues include S49, D136, and N148. ATP-binding positions include 168 to 169 and 210 to 216; these read TD and TGGMLTK. The PUA domain maps to 275–355; sequence QGSIWVDKGA…KGVLIYRDDW (81 aa).

This sequence belongs to the glutamate 5-kinase family.

Its subcellular location is the cytoplasm. The catalysed reaction is L-glutamate + ATP = L-glutamyl 5-phosphate + ADP. Its pathway is amino-acid biosynthesis; L-proline biosynthesis; L-glutamate 5-semialdehyde from L-glutamate: step 1/2. Catalyzes the transfer of a phosphate group to glutamate to form L-glutamate 5-phosphate. The protein is Glutamate 5-kinase of Streptococcus pneumoniae (strain ATCC 700669 / Spain 23F-1).